The following is a 226-amino-acid chain: 2,3-bisphosphoglycerate-dependent phosphoglycerate mutase (226 aa).

Substrate is bound by residues 8-15 (RHGQSVWN), 21-22 (TG), Arg58, 109-112 (ERMY), Lys120, 136-137 (RR), and 180-181 (GN). Residue His9 is the Tele-phosphohistidine intermediate of the active site. Glu109 (proton donor/acceptor) is an active-site residue.

The protein belongs to the phosphoglycerate mutase family. BPG-dependent PGAM subfamily.

The enzyme catalyses (2R)-2-phosphoglycerate = (2R)-3-phosphoglycerate. It participates in carbohydrate degradation; glycolysis; pyruvate from D-glyceraldehyde 3-phosphate: step 3/5. Catalyzes the interconversion of 2-phosphoglycerate and 3-phosphoglycerate. The chain is 2,3-bisphosphoglycerate-dependent phosphoglycerate mutase from Chlamydia trachomatis serovar A (strain ATCC VR-571B / DSM 19440 / HAR-13).